The sequence spans 526 residues: MPWLTVSGLDLGSVVTSTWHLLLLGAASWILARILAWTYSFCENCSRLRCFPQSPKRNWFLGHLGTIQSNEEGMRLVTEMGQTFRDIHLCWLGPVIPVLRLVDPAFVAPLLQAPALVAPKDTTFLRFLKPWLGDGLFLSSGDKWSRHRRLLTPAFHFDILKPYVKIFNQSVNIMHAKWKHLCLEGSARLEMFENISLMTLDSLQKCLFGFDSNCQESPSEYISAILELSSLIIKRSQQLFLYLDFLYYRTADGRRFRKACDLVHNFTDAVIRERRRLLSSQGTDEFLESKTKSKSKTLDFIDVLLLAKDEHGKELSDEDIRAEADTFMFGGHDTTASALSWILYNLARHPEYQERCRQEVWELLRDREPEEIEWDDLAQLPFLTMCIKESLRLHPPAIDLLRRCTQDIVLPDGRVIPKGNICVISIFGIHHNPSVWPDPEVFDPFRFDSENRQKRSPLSFIPFSAGPRNCIGQTFAMNEMKVVVALTLLRFRVLPDDKEPRRKPEIILRAEGGLWLRMEPLSTDTQ.

Heme is bound at residue C470.

It belongs to the cytochrome P450 family. Heme is required as a cofactor. As to expression, high expression in liver and kidney. Lower expression in brain.

The protein localises to the endoplasmic reticulum membrane. Its subcellular location is the microsome membrane. It catalyses the reaction an organic molecule + reduced [NADPH--hemoprotein reductase] + O2 = an alcohol + oxidized [NADPH--hemoprotein reductase] + H2O + H(+). The protein is Cytochrome P450 4F5 (Cyp4f5) of Rattus norvegicus (Rat).